The following is a 446-amino-acid chain: Probable carboxylesterase 16 (446 aa).

Positions 84 to 131 are disordered; the sequence is PEPDSLRHKDNYNHQPRSDRRHSYGPNHNSPAPAERNESRRNSYGCNN. The span at 87-105 shows a compositional bias: basic and acidic residues; that stretch reads DSLRHKDNYNHQPRSDRRH. The short motif at 158 to 160 is the Involved in the stabilization of the negatively charged intermediate by the formation of the oxyanion hole element; sequence HGG. Catalysis depends on residues Ser-274, Asp-378, and His-408.

It belongs to the 'GDXG' lipolytic enzyme family. Expressed in roots, leaves, stems, flowers and siliques.

It catalyses the reaction a carboxylic ester + H2O = an alcohol + a carboxylate + H(+). Its function is as follows. Carboxylesterase acting on esters with varying acyl chain length. The chain is Probable carboxylesterase 16 (CXE16) from Arabidopsis thaliana (Mouse-ear cress).